The primary structure comprises 953 residues: MFEKIPNQNSHSMGDNNTGYYNNNNNNNNNNNNNNNNSNNNNNNSNNNNNNNINNNNNNNNNNNNNNNNNNNNNNNTSQQLPSPQLSQPNSMNTTPNQTSPNLRSSPNRVANNMTQINILTPHLLPGSPSASPIPISSIPTASVYRQPFSSSSSSNHDQGSYPIINTKSIIPSASQLQSQNLNIINSINNNFSKDSPNSQNNTSFNEDTIFIASTTYGSSNTPNNNNNNINNNNSNNNNNSNNSNNNNNSTNNNNNSSNINSPNDFNNNHNNNNNNNNNNNNNNNNNNSSNSNINNNNNNSNNSNNNIDNSNNNNNNNNVRSGNSNVNANGHNRLKRKSKENIYNNNNQNNNNQNNNQNNNHNNNHNNNHNNNQNNNQNNIQNTNQNNIQNNHNQQNNNNHQNNNNQNNNYQNNNNQNSGNNNNQNHHNNKFNQNNNHNQNNHSNNQNKNNHNNNHNNNNHNNNNHNNNNNNHNNNNNNHNNNNNHNNQNNHNNQNNNHNNNQNNNYNNNQNNNYNPNNYGNNYNPNNNYNNSNNPNNMNNNYNHNQNNNNNNNNNNQNYNNNHNNQFNNQNNQIHNQSNNQNNYNQNNNHNNNNQNNNNNNQNNNNNNNQNNNNNNNNINNNNNNNNNNNNGNTGLSSSTNNSKHSSPRSSPNNSPLNYNTNEEYYNSGSSSPSSPGSPNSSILQITDGNNGFNNQNNLNNGNNGNQNYNNNNGQFNNNFDNNGQNNNNNNNNNNNNNNNNNENNRNSPTTTQPQIQTTQPLINGANSAFVFPSTPKTNSSTTLFGVMPNEQETWIEIRDLSCSISKMAKSSLTNGITEEMLNEIKEKGTDLINMIENVTQKEKLERKYNDDDRNRIFPPLTRPRRFRKKKKPNVTEPPVEKVKKKADTLFCTSCGTTQTPEWRKGPAGGKSLCNACGLHYAKLMKKEIQLSKVETTSSPPSTSMNVVNLLN.

The segment covering 1–21 has biased composition (polar residues); sequence MFEKIPNQNSHSMGDNNTGYY. Disordered regions lie at residues 1–109 and 216–756; these read MFEK…SPNR and TYGS…TQPQ. Positions 22–89 are enriched in low complexity; sequence NNNNNNNNNN…QLPSPQLSQP (68 aa). The segment covering 90 to 109 has biased composition (polar residues); the sequence is NSMNTTPNQTSPNLRSSPNR. Composition is skewed to low complexity over residues 219–330, 342–683, and 690–756; these read SSNT…VNAN, NIYN…PNSS, and GNNG…TQPQ. Residues 893–918 form a GATA-type zinc finger; sequence CTSCGTTQTPEWRKGPAGGKSLCNAC. Residues 934–953 are disordered; the sequence is KVETTSSPPSTSMNVVNLLN.

The polypeptide is GATA zinc finger domain-containing protein 14 (gtaN) (Dictyostelium discoideum (Social amoeba)).